We begin with the raw amino-acid sequence, 89 residues long: MATVIAKVKVMPTSPEVDKESLKATLKELVENNDAKCRGVSDEPLAFGLYTVFVMVEMEEKEGGMDPIEEAMNALENVESAEVVELSLV.

It belongs to the EF-1-beta/EF-1-delta family.

Its function is as follows. Promotes the exchange of GDP for GTP in EF-1-alpha/GDP, thus allowing the regeneration of EF-1-alpha/GTP that could then be used to form the ternary complex EF-1-alpha/GTP/AAtRNA. The polypeptide is Elongation factor 1-beta (Methanococcus maripaludis (strain C7 / ATCC BAA-1331)).